Consider the following 449-residue polypeptide: GTPase Der (449 aa).

2 consecutive EngA-type G domains span residues 4–169 (PIVA…PAGE) and 177–353 (IQVA…EQHR). GTP contacts are provided by residues 10–17 (GRPNVGKS), 57–61 (DTGGL), 120–123 (NKCE), 183–190 (GRPNVGKS), 230–234 (DTAGI), and 295–298 (NKWD). Residues 354–439 (RRVTTAVVND…PIRLLWRSKK (86 aa)) form the KH-like domain.

Belongs to the TRAFAC class TrmE-Era-EngA-EngB-Septin-like GTPase superfamily. EngA (Der) GTPase family. Associates with the 50S ribosomal subunit.

Functionally, GTPase that plays an essential role in the late steps of ribosome biogenesis. The polypeptide is GTPase Der (Thermosynechococcus vestitus (strain NIES-2133 / IAM M-273 / BP-1)).